The primary structure comprises 147 residues: UPF0306 protein YhbP (147 aa).

It belongs to the UPF0306 family.

The polypeptide is UPF0306 protein YhbP (Escherichia coli O6:K15:H31 (strain 536 / UPEC)).